Consider the following 316-residue polypeptide: Olfactory receptor 5AP2 (316 aa).

Residues 1–34 (MRLMKEVRGRNQTEVTEFLLLGLSDNPDLQGVLF) are Extracellular-facing. N-linked (GlcNAc...) asparagine glycosylation occurs at Asn11. A helical membrane pass occupies residues 35-55 (ALFLLIYMANMVGNLGMIVLI). Residue Lys56 is a topological domain, cytoplasmic. The helical transmembrane segment at 57–77 (IDLCLHTPMYFFLSSLSFVDA) threads the bilayer. The Extracellular segment spans residues 78–104 (SYSSSVTPKMLVNLMAENKAISFHGCA). A disulfide bond links Cys103 and Cys195. A helical membrane pass occupies residues 105 to 125 (AQFYFFGSFLGTECFLLAMMA). At 126–135 (YDRYAAIWNP) the chain is on the cytoplasmic side. The helical transmembrane segment at 136-156 (LLYPVLVSGRICFLLIATSFL) threads the bilayer. The Extracellular segment spans residues 157 to 210 (AGCGNAAIHTGMTFRLSFCGSNRINHFYCDTPPLLKLSCSDTHFNGIVIMAFSS). A helical membrane pass occupies residues 211–231 (FIVISCVMIVLISYLCIFIAV). At 232 to 245 (LKMPSLEGRHKAFS) the chain is on the cytoplasmic side. A helical transmembrane segment spans residues 246-266 (TCASYLMAVTIFFGTILFMYL). Residues 267–278 (RPTSSYSMEQDK) lie on the Extracellular side of the membrane. The chain crosses the membrane as a helical span at residues 279-299 (VVSVFYTVIIPVLNPLIYSLK). Residues 300 to 316 (NKDVKKALKKILWKHIL) are Cytoplasmic-facing.

Belongs to the G-protein coupled receptor 1 family.

The protein localises to the cell membrane. Its function is as follows. Odorant receptor. The chain is Olfactory receptor 5AP2 from Homo sapiens (Human).